The sequence spans 64 residues: Large ribosomal subunit protein bL33c (64 aa).

It belongs to the bacterial ribosomal protein bL33 family.

It is found in the plastid. It localises to the chloroplast. This is Large ribosomal subunit protein bL33c (rpl33) from Mesostigma viride (Green alga).